The primary structure comprises 214 residues: Endothelin-3 (214 aa).

Positions 1–16 (MEPGLWLLLGLTVTSA) are cleaved as a signal peptide. The propeptide occupies 17–94 (AGLVPCPQSG…DKGLPAHHRP (78 aa)). The segment at 24-91 (QSGDSGRASV…KQEDKGLPAH (68 aa)) is disordered. Over residues 25–35 (SGDSGRASVSQ) the composition is skewed to polar residues. Intrachain disulfides connect cysteine 97–cysteine 111 and cysteine 99–cysteine 107. Residues 118 to 214 (INTPEQTVPY…MSRTDKAHRP (97 aa)) constitute a propeptide that is removed on maturation. The endothelin-like stretch occupies residues 159–173 (CTCMGADDKACAHFC). Residues 183–214 (SGRAERPAAEEMRETGGPRQRLMSRTDKAHRP) are disordered. Residues 185–198 (RAERPAAEEMRETG) show a composition bias toward basic and acidic residues.

This sequence belongs to the endothelin/sarafotoxin family.

It is found in the secreted. Endothelins are endothelium-derived vasoconstrictor peptides. The polypeptide is Endothelin-3 (Edn3) (Mus musculus (Mouse)).